The primary structure comprises 173 residues: Alpha-crystallin A chain (173 aa).

N-acetylmethionine is present on Met-1. The interval 1–63 is required for complex formation with BFSP1 and BFSP2; that stretch reads MDIAIQHPWF…RTVLDSGVSE (63 aa). Deamidated glutamine; partial is present on Gln-6. Ser-45 is modified (phosphoserine). Gln-50 bears the Deamidated glutamine; partial mark. In terms of domain architecture, sHSP spans 52–162; it reads LFRTVLDSGV…GHSERAIPVS (111 aa). Lys-70 carries the post-translational modification N6-acetyllysine. Residue His-79 participates in Zn(2+) binding. Gln-90 is subject to Deamidated glutamine; partial. An N6-acetyllysine modification is found at Lys-99. His-100 lines the Zn(2+) pocket. Asn-101 is modified (deamidated asparagine; partial). Zn(2+) is bound by residues Glu-102 and His-107. Ser-122 is subject to Phosphoserine. Asn-123 is subject to Deamidated asparagine; partial. Residues 144 to 173 are disordered; that stretch reads PKVPSGVDAGHSERAIPVSREEKPSSAPTS. A compositionally biased stretch (basic and acidic residues) spans 153 to 167; that stretch reads GHSERAIPVSREEKP. His-154 lines the Zn(2+) pocket. Ser-162 is a glycosylation site (O-linked (GlcNAc) serine).

It belongs to the small heat shock protein (HSP20) family. As to quaternary structure, heteromer composed of three CRYAA and one CRYAB subunits. Inter-subunit bridging via zinc ions enhances stability, which is crucial as there is no protein turn over in the lens. Can also form homodimers and homotetramers (dimers of dimers) which serve as the building blocks of homooligomers. Within homooligomers, the zinc-binding motif is created from residues of 3 different molecules. His-100 and Glu-102 from one molecule are ligands of the zinc ion, and His-107 and His-154 residues from additional molecules complete the site with tetrahedral coordination geometry. Part of a complex required for lens intermediate filament formation composed of BFSP1, BFSP2 and CRYAA. Post-translationally, acetylation at Lys-70 may increase chaperone activity. Undergoes age-dependent proteolytical cleavage at the C-terminus.

The protein resides in the cytoplasm. The protein localises to the nucleus. Contributes to the transparency and refractive index of the lens. Acts as a chaperone, preventing aggregation of various proteins under a wide range of stress conditions. Required for the correct formation of lens intermediate filaments as part of a complex composed of BFSP1, BFSP2 and CRYAA. This chain is Alpha-crystallin A chain (CRYAA), found in Sus scrofa (Pig).